We begin with the raw amino-acid sequence, 736 residues long: Alpha-xylosidase A (736 aa).

The signal sequence occupies residues 1-18 (MYFSSFLALGALVQAAAA). N-linked (GlcNAc...) asparagine glycosylation is found at asparagine 24, asparagine 279, asparagine 332, and asparagine 376. Aspartate 413 is a catalytic residue. N-linked (GlcNAc...) asparagine glycosylation is present at asparagine 471. Aspartate 505 functions as the Proton donor in the catalytic mechanism. 4 N-linked (GlcNAc...) asparagine glycosylation sites follow: asparagine 655, asparagine 676, asparagine 690, and asparagine 701.

It belongs to the glycosyl hydrolase 31 family.

The protein localises to the secreted. It catalyses the reaction Hydrolysis of terminal, non-reducing alpha-D-xylose residues with release of alpha-D-xylose.. Its function is as follows. Catalyzes the liberation of alpha-xylose from the non-reducing terminal glucose of xyloglucan oligosaccharides. This Aspergillus niger (strain ATCC MYA-4892 / CBS 513.88 / FGSC A1513) protein is Alpha-xylosidase A.